The sequence spans 879 residues: Prostaglandin F2 receptor negative regulator (879 aa).

Residues 1–21 form the signal peptide; it reads MGRPAPRPLLLALLSLAVCRG. 2 Ig-like C2-type domains span residues 22–129 and 149–268; these read RVVR…ATVQ and PSSR…KAVE. Residues 22 to 832 lie on the Extracellular side of the membrane; sequence RVVRVPAGTL…MDVLNAFKYP (811 aa). 2 disulfides stabilise this stretch: Cys-43/Cys-119 and Cys-169/Cys-247. Residue Asn-44 is glycosylated (N-linked (GlcNAc...) asparagine). Positions 89–91 match the Cell attachment site motif; sequence RGD. Thr-271 is subject to Phosphothreonine. Ig-like C2-type domains are found at residues 276–389, 406–527, 544–662, and 688–813; these read PTAL…WHKV, PEYQ…RNSS, ASED…AWSP, and PIFN…AEIH. Cys-299 and Cys-373 are disulfide-bonded. N-linked (GlcNAc...) asparagine glycosylation is found at Asn-300, Asn-383, and Asn-413. The short motif at 424–427 is the Endoplasmic reticulum retention signal element; that stretch reads PTEL. An intrachain disulfide couples Cys-429 to Cys-515. Asn-525, Asn-600, Asn-618, and Asn-691 each carry an N-linked (GlcNAc...) asparagine glycan. An intrachain disulfide couples Cys-571 to Cys-655. The Cell attachment site signature appears at 703–705; that stretch reads RGD. The cysteines at positions 711 and 793 are disulfide-linked. The chain crosses the membrane as a helical span at residues 833-853; sequence LLIGVGLSTVIGLLSCLIGYC. The Cytoplasmic portion of the chain corresponds to 854-879; sequence SSHWCCKKEVRETRRERRRLMSMEMD.

Interacts with CD9 and CD81. Part of a complex composed of CD9, CD81 and IGSF8. Also seems to interact with CD63, CD82 and CD151. As to expression, reproductive tissues, lung and heart.

Its subcellular location is the endoplasmic reticulum membrane. The protein resides in the golgi apparatus. It localises to the trans-Golgi network membrane. Inhibits the binding of prostaglandin F2-alpha (PGF2-alpha) to its specific FP receptor, by decreasing the receptor number rather than the affinity constant. Functional coupling with the prostaglandin F2-alpha receptor seems to occur. In myoblasts, associates with tetraspanins CD9 and CD81 to prevent myotube fusion during muscle regeneration. The polypeptide is Prostaglandin F2 receptor negative regulator (Ptgfrn) (Rattus norvegicus (Rat)).